A 103-amino-acid polypeptide reads, in one-letter code: Co-chaperonin GroES (103 aa).

It belongs to the GroES chaperonin family. In terms of assembly, heptamer of 7 subunits arranged in a ring. Interacts with the chaperonin GroEL.

The protein localises to the cytoplasm. Together with the chaperonin GroEL, plays an essential role in assisting protein folding. The GroEL-GroES system forms a nano-cage that allows encapsulation of the non-native substrate proteins and provides a physical environment optimized to promote and accelerate protein folding. GroES binds to the apical surface of the GroEL ring, thereby capping the opening of the GroEL channel. This is Co-chaperonin GroES from Trichodesmium erythraeum (strain IMS101).